A 134-amino-acid chain; its full sequence is Small ribosomal subunit protein uS11 (134 aa).

The interval 114–134 (TPVPHNGTRPPRKWFKRQEKR) is disordered. The span at 123 to 134 (PPRKWFKRQEKR) shows a compositional bias: basic residues.

It belongs to the universal ribosomal protein uS11 family. In terms of assembly, part of the 30S ribosomal subunit. Interacts with proteins S7 and S18. Binds to IF-3.

Its function is as follows. Located on the platform of the 30S subunit, it bridges several disparate RNA helices of the 16S rRNA. Forms part of the Shine-Dalgarno cleft in the 70S ribosome. This is Small ribosomal subunit protein uS11 from Mesomycoplasma hyopneumoniae (strain J / ATCC 25934 / NCTC 10110) (Mycoplasma hyopneumoniae).